The sequence spans 728 residues: 1,4-alpha-glucan branching enzyme GlgB (728 aa).

The active-site Nucleophile is the D405. E458 serves as the catalytic Proton donor.

The protein belongs to the glycosyl hydrolase 13 family. GlgB subfamily. In terms of assembly, monomer.

The enzyme catalyses Transfers a segment of a (1-&gt;4)-alpha-D-glucan chain to a primary hydroxy group in a similar glucan chain.. It participates in glycan biosynthesis; glycogen biosynthesis. Its function is as follows. Catalyzes the formation of the alpha-1,6-glucosidic linkages in glycogen by scission of a 1,4-alpha-linked oligosaccharide from growing alpha-1,4-glucan chains and the subsequent attachment of the oligosaccharide to the alpha-1,6 position. The sequence is that of 1,4-alpha-glucan branching enzyme GlgB from Salmonella paratyphi B (strain ATCC BAA-1250 / SPB7).